Reading from the N-terminus, the 189-residue chain is HGPRTase-like protein 1 (189 aa).

This sequence belongs to the purine/pyrimidine phosphoribosyltransferase family. Archaeal HPRT subfamily.

Its function is as follows. May catalyze a purine salvage reaction, the substrate is unknown. In Natrialba magadii (strain ATCC 43099 / DSM 3394 / CCM 3739 / CIP 104546 / IAM 13178 / JCM 8861 / NBRC 102185 / NCIMB 2190 / MS3) (Natronobacterium magadii), this protein is HGPRTase-like protein 1.